We begin with the raw amino-acid sequence, 402 residues long: Argininosuccinate synthase (402 aa).

ATP is bound by residues 13–21 (AYSGGLDTS) and Ala-40. 2 residues coordinate L-citrulline: Tyr-91 and Ser-96. An ATP-binding site is contributed by Gly-121. Positions 123, 127, and 128 each coordinate L-aspartate. Residue Asn-127 coordinates L-citrulline. 5 residues coordinate L-citrulline: Arg-131, Ser-180, Ser-189, Glu-265, and Tyr-277.

Belongs to the argininosuccinate synthase family. Type 1 subfamily. In terms of assembly, homotetramer.

It is found in the cytoplasm. The catalysed reaction is L-citrulline + L-aspartate + ATP = 2-(N(omega)-L-arginino)succinate + AMP + diphosphate + H(+). The protein operates within amino-acid biosynthesis; L-arginine biosynthesis; L-arginine from L-ornithine and carbamoyl phosphate: step 2/3. The sequence is that of Argininosuccinate synthase from Leptospira biflexa serovar Patoc (strain Patoc 1 / Ames).